The chain runs to 320 residues: uncharacterized protein (320 aa).

46 to 53 (DVPGVGKT) contacts ATP.

It belongs to the MoxR family.

This is an uncharacterized protein from Bacillus subtilis (strain 168).